Here is a 257-residue protein sequence, read N- to C-terminus: E3 ubiquitin-protein ligase RNF170 (257 aa).

Residues 1 to 24 (MADNQEERPHFPLDEGSIIEGVSD) are Lumenal-facing. The chain crosses the membrane as a helical span at residues 25-45 (QVIVVVLLSFVAVGSLIYLLL). Over 46 to 200 (RNDEQNIHPE…GGLFWMFRIR (155 aa)) the chain is Cytoplasmic. Residues 87–130 (CPVCLQQATFPVETNCGHLFCGSCIIAYWRYGTWLGAINCPICR) form an RING-type zinc finger. The helical transmembrane segment at 201–221 (IVLCLLGALLYLVSPLDIIPE) threads the bilayer. Ala222 is a topological domain (lumenal). A helical transmembrane segment spans residues 223 to 243 (LFGILGFLDDLFVLFLLLIYI). At 244-257 (SIMYREVVTQRLYR) the chain is on the cytoplasmic side.

It is found in the endoplasmic reticulum membrane. The catalysed reaction is S-ubiquitinyl-[E2 ubiquitin-conjugating enzyme]-L-cysteine + [acceptor protein]-L-lysine = [E2 ubiquitin-conjugating enzyme]-L-cysteine + N(6)-ubiquitinyl-[acceptor protein]-L-lysine.. The protein operates within protein modification; protein ubiquitination. In terms of biological role, E3 ubiquitin-protein ligase that plays an essential role in stimulus-induced inositol 1,4,5-trisphosphate receptor (ITPR) ubiquitination and degradation via the endoplasmic reticulum-associated degradation (ERAD) pathway. Also involved in ITPR turnover in resting cells. This Xenopus laevis (African clawed frog) protein is E3 ubiquitin-protein ligase RNF170 (rnf170).